Here is a 217-residue protein sequence, read N- to C-terminus: 3,4-dihydroxy-2-butanone 4-phosphate synthase (217 aa).

D-ribulose 5-phosphate-binding positions include 37–38, Asp42, 150–154, and Glu174; these read RE and RRGHT. Glu38 contacts Mg(2+). A Mg(2+)-binding site is contributed by His153.

The protein belongs to the DHBP synthase family. In terms of assembly, homodimer. Mg(2+) is required as a cofactor. Requires Mn(2+) as cofactor.

The enzyme catalyses D-ribulose 5-phosphate = (2S)-2-hydroxy-3-oxobutyl phosphate + formate + H(+). It functions in the pathway cofactor biosynthesis; riboflavin biosynthesis; 2-hydroxy-3-oxobutyl phosphate from D-ribulose 5-phosphate: step 1/1. Its function is as follows. Catalyzes the conversion of D-ribulose 5-phosphate to formate and 3,4-dihydroxy-2-butanone 4-phosphate. In Serratia proteamaculans (strain 568), this protein is 3,4-dihydroxy-2-butanone 4-phosphate synthase.